The sequence spans 179 residues: uncharacterized protein (179 aa).

2 disordered regions span residues 26–103 and 136–179; these read LSAV…SYED and KHKA…SWFN. Over residues 34–61 the composition is skewed to basic and acidic residues; sequence QQGKNEEQRQHDEWVAERNREIQQEKQR. Low complexity predominate over residues 63–79; the sequence is ANAQAAANKRAATAAAN. 2 stretches are compositionally biased toward basic and acidic residues: residues 82–103 and 158–179; these read ARQD…SYED and GGRD…SWFN.

This is an uncharacterized protein from Escherichia coli (strain K12).